We begin with the raw amino-acid sequence, 93 residues long: Large ribosomal subunit protein uL23c (93 aa).

This sequence belongs to the universal ribosomal protein uL23 family. In terms of assembly, part of the 50S ribosomal subunit.

The protein localises to the plastid. It is found in the chloroplast. Functionally, binds to 23S rRNA. This chain is Large ribosomal subunit protein uL23c (rpl23), found in Adiantum capillus-veneris (Maidenhair fern).